The following is a 360-amino-acid chain: UDP-N-acetylglucosamine--N-acetylmuramyl-(pentapeptide) pyrophosphoryl-undecaprenol N-acetylglucosamine transferase (360 aa).

UDP-N-acetyl-alpha-D-glucosamine is bound by residues Ser-198 and Gln-289.

The protein belongs to the glycosyltransferase 28 family. MurG subfamily.

The protein localises to the cell membrane. The catalysed reaction is Mur2Ac(oyl-L-Ala-gamma-D-Glu-L-Lys-D-Ala-D-Ala)-di-trans,octa-cis-undecaprenyl diphosphate + UDP-N-acetyl-alpha-D-glucosamine = beta-D-GlcNAc-(1-&gt;4)-Mur2Ac(oyl-L-Ala-gamma-D-Glu-L-Lys-D-Ala-D-Ala)-di-trans,octa-cis-undecaprenyl diphosphate + UDP + H(+). Its pathway is cell wall biogenesis; peptidoglycan biosynthesis. In terms of biological role, cell wall formation. Catalyzes the transfer of a GlcNAc subunit on undecaprenyl-pyrophosphoryl-MurNAc-pentapeptide (lipid intermediate I) to form undecaprenyl-pyrophosphoryl-MurNAc-(pentapeptide)GlcNAc (lipid intermediate II). This chain is UDP-N-acetylglucosamine--N-acetylmuramyl-(pentapeptide) pyrophosphoryl-undecaprenol N-acetylglucosamine transferase, found in Streptococcus pyogenes serotype M6 (strain ATCC BAA-946 / MGAS10394).